Consider the following 400-residue polypeptide: Elongation factor Tu (400 aa).

Residues 10–208 (KPHMNVGTIG…AMDSYFPDPV (199 aa)) enclose the tr-type G domain. A G1 region spans residues 19–26 (GHIDHGKT). 19-26 (GHIDHGKT) serves as a coordination point for GTP. T26 is a Mg(2+) binding site. The segment at 60–64 (GITIN) is G2. A G3 region spans residues 81-84 (DCPG). GTP-binding positions include 81–85 (DCPGH) and 136–139 (NKVD). Residues 136 to 139 (NKVD) form a G4 region. The segment at 174–176 (SAL) is G5.

This sequence belongs to the TRAFAC class translation factor GTPase superfamily. Classic translation factor GTPase family. EF-Tu/EF-1A subfamily. In terms of assembly, monomer.

It localises to the cytoplasm. It carries out the reaction GTP + H2O = GDP + phosphate + H(+). Functionally, GTP hydrolase that promotes the GTP-dependent binding of aminoacyl-tRNA to the A-site of ribosomes during protein biosynthesis. This Fervidobacterium nodosum (strain ATCC 35602 / DSM 5306 / Rt17-B1) protein is Elongation factor Tu.